The primary structure comprises 618 residues: DNA ligase 2 (618 aa).

The segment covering 197-208 (DKKTLESREDAK) has biased composition (basic and acidic residues). Residues 197 to 250 (DKKTLESREDAKSVPPASQPEITNKISGDTSPNTSESVQTKKSDPDTSSNVDPS) form a disordered region. Over residues 216-234 (PEITNKISGDTSPNTSESV) the composition is skewed to polar residues. ATP is bound at residue Glu312. The active-site N6-AMP-lysine intermediate is the Lys314. Arg319, Arg334, Glu363, Phe403, Arg476, and Lys482 together coordinate ATP. Positions 459 to 480 (HEGVMLKDPDSTYNPGSRGQHW) are disordered.

Belongs to the ATP-dependent DNA ligase family. Mg(2+) is required as a cofactor.

It catalyses the reaction ATP + (deoxyribonucleotide)n-3'-hydroxyl + 5'-phospho-(deoxyribonucleotide)m = (deoxyribonucleotide)n+m + AMP + diphosphate.. Its function is as follows. DNA ligase that seals nicks in double-stranded DNA during DNA replication, DNA recombination and DNA repair. The chain is DNA ligase 2 from Haloquadratum walsbyi (strain DSM 16790 / HBSQ001).